The chain runs to 102 residues: uncharacterized protein (102 aa).

The N-terminal stretch at 1 to 22 (MKFKYGATLFSGFLGLSAILAA) is a signal peptide. A lipid anchor (N-palmitoyl cysteine) is attached at Cys-23. The S-diacylglycerol cysteine moiety is linked to residue Cys-23.

It belongs to the MG185/MG260 family.

It localises to the cell membrane. This is an uncharacterized protein from Mycoplasma pneumoniae (strain ATCC 29342 / M129 / Subtype 1) (Mycoplasmoides pneumoniae).